Here is a 103-residue protein sequence, read N- to C-terminus: Small ribosomal subunit protein uS10 (103 aa).

This sequence belongs to the universal ribosomal protein uS10 family. Part of the 30S ribosomal subunit.

Involved in the binding of tRNA to the ribosomes. The protein is Small ribosomal subunit protein uS10 of Borrelia recurrentis (strain A1).